The sequence spans 348 residues: Protein RecA (348 aa).

65-72 serves as a coordination point for ATP; that stretch reads GPESSGKT.

This sequence belongs to the RecA family.

It is found in the cytoplasm. Can catalyze the hydrolysis of ATP in the presence of single-stranded DNA, the ATP-dependent uptake of single-stranded DNA by duplex DNA, and the ATP-dependent hybridization of homologous single-stranded DNAs. It interacts with LexA causing its activation and leading to its autocatalytic cleavage. The sequence is that of Protein RecA from Vibrio anguillarum (strain ATCC 68554 / 775) (Listonella anguillarum).